A 969-amino-acid chain; its full sequence is Glycine dehydrogenase (decarboxylating) (969 aa).

N6-(pyridoxal phosphate)lysine is present on K716.

This sequence belongs to the GcvP family. The glycine cleavage system is composed of four proteins: P, T, L and H. It depends on pyridoxal 5'-phosphate as a cofactor.

It catalyses the reaction N(6)-[(R)-lipoyl]-L-lysyl-[glycine-cleavage complex H protein] + glycine + H(+) = N(6)-[(R)-S(8)-aminomethyldihydrolipoyl]-L-lysyl-[glycine-cleavage complex H protein] + CO2. Functionally, the glycine cleavage system catalyzes the degradation of glycine. The P protein binds the alpha-amino group of glycine through its pyridoxal phosphate cofactor; CO(2) is released and the remaining methylamine moiety is then transferred to the lipoamide cofactor of the H protein. The polypeptide is Glycine dehydrogenase (decarboxylating) (Shewanella woodyi (strain ATCC 51908 / MS32)).